A 160-amino-acid chain; its full sequence is Protein Vago (160 aa).

Positions 1 to 23 (MESISSMIYLVAMMSLIIGGSQA) are cleaved as a signal peptide.

In terms of tissue distribution, expressed in fat body.

The protein localises to the secreted. In terms of biological role, probably involved in the antiviral immune response. May have a role in controlling viral load in the adult fat body, after infection with viruses such as the Drosophila C virus. This Drosophila melanogaster (Fruit fly) protein is Protein Vago.